The primary structure comprises 149 residues: MPVNPELQGRVLPAAAPYLVGREKVREFARAVGATHPVHLDPEAARAAGHADVVAPSTFPVVLQAMTVTQLLAEPDTGIDYSRVVHGEQAFTYTRPVVAGDELTATLTVTKVATLGGNAMVTAESAMVDGSGAHVVTAVSTLVVRGDDA.

The 102-residue stretch at 16–117 (APYLVGREKV…TVTKVATLGG (102 aa)) folds into the MaoC-like domain.

This sequence belongs to the UPF0336 family.

In Clavibacter michiganensis subsp. michiganensis (strain NCPPB 382), this protein is UPF0336 protein CMM_2793.